Here is a 284-residue protein sequence, read N- to C-terminus: Ribosomal RNA small subunit methyltransferase A (284 aa).

S-adenosyl-L-methionine-binding residues include N22, L24, G49, E70, D97, and N117.

The protein belongs to the class I-like SAM-binding methyltransferase superfamily. rRNA adenine N(6)-methyltransferase family. RsmA subfamily.

The protein localises to the cytoplasm. The enzyme catalyses adenosine(1518)/adenosine(1519) in 16S rRNA + 4 S-adenosyl-L-methionine = N(6)-dimethyladenosine(1518)/N(6)-dimethyladenosine(1519) in 16S rRNA + 4 S-adenosyl-L-homocysteine + 4 H(+). Its function is as follows. Specifically dimethylates two adjacent adenosines (A1518 and A1519) in the loop of a conserved hairpin near the 3'-end of 16S rRNA in the 30S particle. May play a critical role in biogenesis of 30S subunits. This is Ribosomal RNA small subunit methyltransferase A from Desulforapulum autotrophicum (strain ATCC 43914 / DSM 3382 / VKM B-1955 / HRM2) (Desulfobacterium autotrophicum).